Reading from the N-terminus, the 335-residue chain is Nuclear envelope-associated protein 2 (335 aa).

Coiled-coil stretches lie at residues 55-85 (RKEA…ELVA) and 125-260 (CSVL…LKKK). A Bipartite nuclear localization signal motif is present at residues 239–260 (KTKELESQLERQRRADQELKKK). A helical membrane pass occupies residues 312–329 (FWDTSGFKIVVSMSMLIL).

Forms homomers and heteromers with NEAP1 and NEAP3. Interacts with SUN1 and SUN2.

It localises to the nucleus inner membrane. The protein resides in the nucleus. The protein localises to the nucleoplasm. The polypeptide is Nuclear envelope-associated protein 2 (Arabidopsis thaliana (Mouse-ear cress)).